Reading from the N-terminus, the 316-residue chain is Pantothenate kinase (316 aa).

95–102 (GSVAVGKS) serves as a coordination point for ATP.

Belongs to the prokaryotic pantothenate kinase family.

It localises to the cytoplasm. It carries out the reaction (R)-pantothenate + ATP = (R)-4'-phosphopantothenate + ADP + H(+). The protein operates within cofactor biosynthesis; coenzyme A biosynthesis; CoA from (R)-pantothenate: step 1/5. The polypeptide is Pantothenate kinase (Sodalis glossinidius (strain morsitans)).